The primary structure comprises 266 residues: Putative carbamate hydrolase RutD (266 aa).

Residues 14–115 enclose the AB hydrolase-1 domain; it reads PVVVLISGLG…TVLVSVNGWL (102 aa).

It belongs to the AB hydrolase superfamily. Hydrolase RutD family.

The catalysed reaction is carbamate + 2 H(+) = NH4(+) + CO2. Its function is as follows. Involved in pyrimidine catabolism. May facilitate the hydrolysis of carbamate, a reaction that can also occur spontaneously. The polypeptide is Putative carbamate hydrolase RutD (Escherichia coli O9:H4 (strain HS)).